The sequence spans 208 residues: 3-demethoxyubiquinol 3-hydroxylase (208 aa).

Fe cation contacts are provided by E57, E87, H90, E139, E171, and H174.

The protein belongs to the COQ7 family. Requires Fe cation as cofactor.

It localises to the cell membrane. The enzyme catalyses a 5-methoxy-2-methyl-3-(all-trans-polyprenyl)benzene-1,4-diol + AH2 + O2 = a 3-demethylubiquinol + A + H2O. The protein operates within cofactor biosynthesis; ubiquinone biosynthesis. In terms of biological role, catalyzes the hydroxylation of 2-nonaprenyl-3-methyl-6-methoxy-1,4-benzoquinol during ubiquinone biosynthesis. In Burkholderia thailandensis (strain ATCC 700388 / DSM 13276 / CCUG 48851 / CIP 106301 / E264), this protein is 3-demethoxyubiquinol 3-hydroxylase.